We begin with the raw amino-acid sequence, 405 residues long: MKRTIIMMLDSFGVGAATDAESFGDVGSDTFGSIAKACAEGRADIGREGPLKLPNLSKLGLALAAKESTGTFAPGFSDDVEVIGAYGHADELSTGKDTPSGHWEMAGVPVLYEWGYFSDLTNSFPKELTDKILARAGLDGYLGNCHASGTAILEELGEEHMRTGKPIFYTSADSVFQIACHEESFGLENLYNLCIIAREELEPYNIGRVIARAFVGTGPSDFARTGNRRDYAVEPPSKTVLDKMKAAGGEVISVGKIADIYANCGITQKVKATGLEALFDATLEQVKAAGDKSIVFTNFVDFDSHYGHRRDIAGYAKALEYFDSRLPEIFEILGEDDLLLLTADHGCDPSWKGTDHTRERVPVLAYGAGLKAGSLGRRNSFADIGQSIASYFKLEPMEYGESFIK.

Mn(2+) contacts are provided by aspartate 10, aspartate 303, histidine 308, aspartate 344, histidine 345, and histidine 356.

It belongs to the phosphopentomutase family. Mn(2+) serves as cofactor.

It is found in the cytoplasm. The catalysed reaction is 2-deoxy-alpha-D-ribose 1-phosphate = 2-deoxy-D-ribose 5-phosphate. It catalyses the reaction alpha-D-ribose 1-phosphate = D-ribose 5-phosphate. The protein operates within carbohydrate degradation; 2-deoxy-D-ribose 1-phosphate degradation; D-glyceraldehyde 3-phosphate and acetaldehyde from 2-deoxy-alpha-D-ribose 1-phosphate: step 1/2. Functionally, isomerase that catalyzes the conversion of deoxy-ribose 1-phosphate (dRib-1-P) and ribose 1-phosphate (Rib-1-P) to deoxy-ribose 5-phosphate (dRib-5-P) and ribose 5-phosphate (Rib-5-P), respectively. The sequence is that of Phosphopentomutase from Shewanella woodyi (strain ATCC 51908 / MS32).